A 381-amino-acid polypeptide reads, in one-letter code: EDCLYLNIYAPAHAETGSKLPVMVWFPGGAFETGSASIFDGSALASYENVLVVTIQYRLGIFGFFNTGDEHARGNWAFMDQVAALVWVQENIEFFGGDPRCVTIFGESAGAISVSSLILSPMTKGLFHKAIMASGVAIIPYLKASDYERNDDLQTIASICDCNASDSVALLQCLRAKSSEELLSISQKTKSFTRVVDGLFFPNELLDLLAQKLFHLVPSIIGVNNHECGFLLPMKEFPEILGGSNKSLALQLIHSVLHIPVQYSYLVADEYFHNKHSLLDIRNRFLDLLGDVFFVVPGLVTAQYHTDAGAPVYFYEFQHRPQCLKDRKPPFVKADHTDEIRFVFGGAFLKGNIVMFEEATEEEKALSRKMMRYWANFARTG.

Catalysis depends on Ser-108, which acts as the Acyl-ester intermediate. The cysteines at positions 162 and 173 are disulfide-linked. Asn-163 carries an N-linked (GlcNAc...) asparagine glycan. Glu-227 functions as the Charge relay system in the catalytic mechanism. The N-linked (GlcNAc...) asparagine glycan is linked to Asn-245. Catalysis depends on His-336, which acts as the Charge relay system.

It belongs to the type-B carboxylesterase/lipase family. In terms of assembly, component of a epididymal complex at least composed of soluble form of prion protein PRNP, CLU, BPI, CES5A, MANBA and GLB1. Post-translationally, N-glycosylated. Detected in corpus and cauda epididymal fluid. Present in seminal fluid but not found to be associated with sperm (at protein level). Not expressed in other tissues.

It localises to the secreted. It carries out the reaction a carboxylic ester + H2O = an alcohol + a carboxylate + H(+). Involved in the detoxification of xenobiotics and in the activation of ester and amide prodrugs. This Ovis aries (Sheep) protein is Carboxylesterase 5A (CES5A).